Reading from the N-terminus, the 124-residue chain is Ribonuclease pancreatic (124 aa).

Residues 1 to 13 (KESAAAKFERQHM) are compositionally biased toward basic and acidic residues. Residues 1 to 23 (KESAAAKFERQHMDPSASSISSS) form a disordered region. The substrate site is built by K7 and R10. Residue H12 is the Proton acceptor of the active site. 4 disulfide bridges follow: C26–C84, C40–C95, C58–C110, and C65–C72. A glycan (N-linked (GlcNAc...) asparagine) is linked at N34. Substrate is bound by residues 41-45 (KPVNT), K66, and R85. H119 acts as the Proton donor in catalysis.

The protein belongs to the pancreatic ribonuclease family. As to quaternary structure, monomer. Interacts with and forms tight 1:1 complexes with RNH1. Dimerization of two such complexes may occur. Interaction with RNH1 inhibits this protein. Pancreas.

The protein resides in the secreted. It carries out the reaction an [RNA] containing cytidine + H2O = an [RNA]-3'-cytidine-3'-phosphate + a 5'-hydroxy-ribonucleotide-3'-[RNA].. The enzyme catalyses an [RNA] containing uridine + H2O = an [RNA]-3'-uridine-3'-phosphate + a 5'-hydroxy-ribonucleotide-3'-[RNA].. In terms of biological role, endonuclease that catalyzes the cleavage of RNA on the 3' side of pyrimidine nucleotides. Acts on single-stranded and double-stranded RNA. The sequence is that of Ribonuclease pancreatic (RNASE1) from Alces alces alces (European moose).